A 139-amino-acid polypeptide reads, in one-letter code: Putative nickel-responsive regulator (139 aa).

Residues histidine 79, histidine 90, histidine 92, and cysteine 98 each coordinate Ni(2+).

It belongs to the transcriptional regulatory CopG/NikR family. It depends on Ni(2+) as a cofactor.

Its function is as follows. Transcriptional regulator. This is Putative nickel-responsive regulator from Solidesulfovibrio magneticus (strain ATCC 700980 / DSM 13731 / RS-1) (Desulfovibrio magneticus).